Consider the following 530-residue polypeptide: UDP-glucuronosyltransferase 2B17 (530 aa).

Residues 1-23 (MPGKWISALLLLQISCCFQSGNC) form the signal peptide. The helical transmembrane segment at 494-510 (VIGFLLTCSAVIAVLTV) threads the bilayer.

The protein belongs to the UDP-glycosyltransferase family.

Its subcellular location is the endoplasmic reticulum membrane. The catalysed reaction is glucuronate acceptor + UDP-alpha-D-glucuronate = acceptor beta-D-glucuronoside + UDP + H(+). It catalyses the reaction 17alpha-estradiol + UDP-alpha-D-glucuronate = 17alpha-estradiol 3-O-(beta-D-glucuronate) + UDP + H(+). The enzyme catalyses 17alpha-estradiol + UDP-alpha-D-glucuronate = 17alpha-estradiol 17-O-(beta-D-glucuronate) + UDP + H(+). It carries out the reaction 17beta-estradiol + UDP-alpha-D-glucuronate = 17beta-estradiol 17-O-(beta-D-glucuronate) + UDP + H(+). The catalysed reaction is 17beta-hydroxy-5alpha-androstan-3-one + UDP-alpha-D-glucuronate = 5alpha-dihydrotestosterone 17-O-(beta-D-glucuronate) + UDP + H(+). It catalyses the reaction testosterone + UDP-alpha-D-glucuronate = testosterone 17-O-(beta-D-glucuronate) + UDP + H(+). Its function is as follows. UDP-glucuronosyltransferase (UGT) that catalyzes phase II biotransformation reactions in which lipophilic substrates are conjugated with glucuronic acid to increase the metabolite's water solubility, thereby facilitating excretion into either the urine or bile. Catalyzes the glucuronidation of endogenous steroid hormones such as androgens (epitestosterone, androsterone) and estrogens (estradiol, epiestradiol). The polypeptide is UDP-glucuronosyltransferase 2B17 (Rattus norvegicus (Rat)).